A 562-amino-acid chain; its full sequence is Protein TBF1 (562 aa).

Residues 376–414 (ASMSNSSSGPHSSHNNSSNSNNNGSIGLRKPKAKRTWSK) are disordered. The span at 377-400 (SMSNSSSGPHSSHNNSSNSNNNGS) shows a compositional bias: low complexity. One can recognise an HTH myb-type domain in the interval 404–460 (RKPKAKRTWSKEEEEALVEGLKEVGPSWSKILDLYGPGGKITENLKNRTQVQLKDKA). Positions 431-456 (WSKILDLYGPGGKITENLKNRTQVQL) form a DNA-binding region, H-T-H motif. Residues 495-562 (FSQSPNSSTI…GFDPHLEDGM (68 aa)) are disordered. 2 stretches are compositionally biased toward polar residues: residues 496-522 (SQSPNSSTIMEQNLSQHPSSAASATED) and 532-552 (GQNSDNMPSNGLFGNSTSDNT).

Homodimer.

The protein resides in the nucleus. It localises to the chromosome. It is found in the telomere. Binds the telomeric double-stranded TTAGGG repeat and negatively regulates telomere length. Involved in the regulation of gene expression. 52 binding sites have been identified, distributed over 15 chromosomes. A member of the general regulatory factors (GRFs) which act as genome partitioners. Acts as a chromatin insulator which are known as STARs (Subtelomeric anti-silencing region). STARs prevent negative or positive transcription influence by extending across chromatin to a promoter. The protein is Protein TBF1 (TBF1) of Saccharomyces cerevisiae (strain ATCC 204508 / S288c) (Baker's yeast).